A 776-amino-acid chain; its full sequence is Structure-specific endonuclease subunit SLX4 (776 aa).

The span at 201 to 217 (EEQMVSDDNSSTEDDTD) shows a compositional bias: acidic residues. Disordered stretches follow at residues 201–223 (EEQM…QNDG), 263–283 (KSLQ…PDQN), and 507–531 (PPLD…KPHS).

It belongs to the SLX4 family. As to quaternary structure, forms a heterodimer with SLX1. In terms of processing, phosphorylated in response to DNA damage.

It localises to the nucleus. Its function is as follows. Regulatory subunit of the SLX1-SLX4 structure-specific endonuclease that resolves DNA secondary structures generated during DNA repair and recombination. Has endonuclease activity towards branched DNA substrates, introducing single-strand cuts in duplex DNA close to junctions with ss-DNA. The sequence is that of Structure-specific endonuclease subunit SLX4 from Candida albicans (strain SC5314 / ATCC MYA-2876) (Yeast).